Consider the following 91-residue polypeptide: MSELDPTESLIEYPSDFPIKVMGLAHDQFVPTIIDVVVVHDPEFHEGRIEQRPSSAGNYLSLTVTVRATSREQLDNLYRALSSHPMVKYVL.

The protein belongs to the UPF0250 family.

The sequence is that of UPF0250 protein mma_3250 from Janthinobacterium sp. (strain Marseille) (Minibacterium massiliensis).